We begin with the raw amino-acid sequence, 558 residues long: uncharacterized protein (558 aa).

Positions 396-420 are disordered; the sequence is SSITDNDTDNDSGATESQQTDSEND. Residues 407–416 are compositionally biased toward polar residues; the sequence is SGATESQQTD.

It belongs to the chlamydial CPn_0065/CT_288/TC_0561 family.

This is an uncharacterized protein from Chlamydia muridarum (strain MoPn / Nigg).